The chain runs to 1375 residues: Ubiquitin carboxyl-terminal hydrolase 47 (1375 aa).

N6-acetyllysine is present on K122. A USP domain is found at 188 to 564 (VGLVNQAMTC…NAYMLIYRLK (377 aa)). The Nucleophile role is filled by C197. The disordered stretch occupies residues 425–452 (DEKSPQTESCTDSGAENEGSCHSDQMSN). The span at 430–452 (QTESCTDSGAENEGSCHSDQMSN) shows a compositional bias: polar residues. The Proton acceptor role is filled by H503. S832 carries the post-translational modification Phosphoserine. Disordered regions lie at residues 840–859 (TAYQKAGGDSGNVDDDCERV), 880–968 (LKSL…SHSS), and 983–1024 (NGLD…ESGK). Over residues 882-899 (SLSLQQQQDGDNGDSSKS) the composition is skewed to low complexity. The residue at position 910 (S910) is a Phosphoserine. Positions 912-928 (LNERDSSASVDNRELEQ) are enriched in basic and acidic residues. The segment covering 929–938 (HIQTSDPENF) has biased composition (polar residues). S933 carries the post-translational modification Phosphoserine. Over residues 940-950 (SEERSDSDVNN) the composition is skewed to basic and acidic residues. Low complexity predominate over residues 953–968 (STSSVDSDILSSSHSS). Residues 997–1006 (KANEGKKETW) are compositionally biased toward basic and acidic residues. Residues 1007–1020 (DTAEEDSGTDSEYD) are compositionally biased toward acidic residues. A Phosphoserine modification is found at S1013. Position 1015 is a phosphothreonine (T1015). The residue at position 1017 (S1017) is a Phosphoserine.

The protein belongs to the peptidase C19 family. In terms of assembly, interacts with BTRC and FBXW11. Interacts with POLB. Expressed in skeletal muscle, heart and testis.

It localises to the cytoplasm. It catalyses the reaction Thiol-dependent hydrolysis of ester, thioester, amide, peptide and isopeptide bonds formed by the C-terminal Gly of ubiquitin (a 76-residue protein attached to proteins as an intracellular targeting signal).. Functionally, ubiquitin-specific protease that specifically deubiquitinates monoubiquitinated DNA polymerase beta (POLB), stabilizing POLB thereby playing a role in base-excision repair (BER). Acts as a regulator of cell growth and genome integrity. May also indirectly regulate CDC25A expression at a transcriptional level. The sequence is that of Ubiquitin carboxyl-terminal hydrolase 47 (USP47) from Homo sapiens (Human).